Consider the following 1246-residue polypeptide: Respiratory nitrate reductase 2 alpha chain (1246 aa).

The 65-residue stretch at 43–107 (DKIVRSTHGV…SYSWYLYSAN (65 aa)) folds into the 4Fe-4S Mo/W bis-MGD-type domain. 4 residues coordinate [4Fe-4S] cluster: histidine 50, cysteine 54, cysteine 58, and cysteine 93. Residue aspartate 223 coordinates Mo-bis(molybdopterin guanine dinucleotide).

It belongs to the prokaryotic molybdopterin-containing oxidoreductase family. In terms of assembly, tetramer composed of an alpha, a beta and 2 gamma chains. Alpha and beta are catalytic chains; gamma chain is involved in binding the enzyme complex to the cytoplasmic membrane. Requires [4Fe-4S] cluster as cofactor. Mo-bis(molybdopterin guanine dinucleotide) serves as cofactor.

The protein localises to the cell membrane. It catalyses the reaction nitrate + a quinol = a quinone + nitrite + H2O. This is a second nitrate reductase enzyme which can substitute for the NRA enzyme and allows E.coli to use nitrate as an electron acceptor during anaerobic growth. Its function is as follows. The alpha chain is the actual site of nitrate reduction. This Escherichia coli (strain K12) protein is Respiratory nitrate reductase 2 alpha chain (narZ).